We begin with the raw amino-acid sequence, 329 residues long: 4-hydroxythreonine-4-phosphate dehydrogenase (329 aa).

Substrate-binding residues include His136 and Thr137. A divalent metal cation is bound by residues His166, His211, and His266. Substrate-binding residues include Lys274, Asn283, and Arg292.

The protein belongs to the PdxA family. As to quaternary structure, homodimer. The cofactor is Zn(2+). Mg(2+) is required as a cofactor. It depends on Co(2+) as a cofactor.

The protein localises to the cytoplasm. The enzyme catalyses 4-(phosphooxy)-L-threonine + NAD(+) = 3-amino-2-oxopropyl phosphate + CO2 + NADH. It functions in the pathway cofactor biosynthesis; pyridoxine 5'-phosphate biosynthesis; pyridoxine 5'-phosphate from D-erythrose 4-phosphate: step 4/5. In terms of biological role, catalyzes the NAD(P)-dependent oxidation of 4-(phosphooxy)-L-threonine (HTP) into 2-amino-3-oxo-4-(phosphooxy)butyric acid which spontaneously decarboxylates to form 3-amino-2-oxopropyl phosphate (AHAP). This Escherichia coli (strain SE11) protein is 4-hydroxythreonine-4-phosphate dehydrogenase.